The following is an 81-amino-acid chain: DNA-directed RNA polymerase subunit Rpo6 (81 aa).

Belongs to the archaeal Rpo6/eukaryotic RPB6 RNA polymerase subunit family. As to quaternary structure, part of the RNA polymerase complex.

It is found in the cytoplasm. It catalyses the reaction RNA(n) + a ribonucleoside 5'-triphosphate = RNA(n+1) + diphosphate. In terms of biological role, DNA-dependent RNA polymerase (RNAP) catalyzes the transcription of DNA into RNA using the four ribonucleoside triphosphates as substrates. In Thermofilum pendens (strain DSM 2475 / Hrk 5), this protein is DNA-directed RNA polymerase subunit Rpo6.